The primary structure comprises 191 residues: uncharacterized protein (191 aa).

Positions 5–65 (GDSREKILHT…IEAVTYTGKI (61 aa)) constitute an HTH tetR-type domain. The segment at residues 28–47 (GLNQIVKESGAPKGSLYHFF) is a DNA-binding region (H-T-H motif).

This is an uncharacterized protein from Bacillus subtilis (strain 168).